A 147-amino-acid polypeptide reads, in one-letter code: UPF0735 ACT domain-containing protein GK2605 (147 aa).

In terms of domain architecture, ACT spans threonine 69–serine 144.

The protein belongs to the UPF0735 family.

The protein is UPF0735 ACT domain-containing protein GK2605 of Geobacillus kaustophilus (strain HTA426).